Here is a 334-residue protein sequence, read N- to C-terminus: Anthranilate phosphoribosyltransferase (334 aa).

5-phospho-alpha-D-ribose 1-diphosphate contacts are provided by residues glycine 81, 84 to 85, threonine 89, 91 to 94, 109 to 117, and alanine 121; these read GD, NIST, and KHGNRSVSS. Glycine 81 is a binding site for anthranilate. Serine 93 provides a ligand contact to Mg(2+). Residue asparagine 112 coordinates anthranilate. Arginine 167 is an anthranilate binding site. Mg(2+) contacts are provided by aspartate 225 and glutamate 226.

It belongs to the anthranilate phosphoribosyltransferase family. In terms of assembly, homodimer. Requires Mg(2+) as cofactor.

The catalysed reaction is N-(5-phospho-beta-D-ribosyl)anthranilate + diphosphate = 5-phospho-alpha-D-ribose 1-diphosphate + anthranilate. Its pathway is amino-acid biosynthesis; L-tryptophan biosynthesis; L-tryptophan from chorismate: step 2/5. In terms of biological role, catalyzes the transfer of the phosphoribosyl group of 5-phosphorylribose-1-pyrophosphate (PRPP) to anthranilate to yield N-(5'-phosphoribosyl)-anthranilate (PRA). The sequence is that of Anthranilate phosphoribosyltransferase from Histophilus somni (strain 2336) (Haemophilus somnus).